Here is a 252-residue protein sequence, read N- to C-terminus: Chitooligosaccharide deacetylase (252 aa).

Residues H61 and H125 each coordinate Mg(2+).

The protein belongs to the YdjC deacetylase family. ChbG subfamily. Homodimer. The cofactor is Mg(2+).

Its subcellular location is the cytoplasm. It catalyses the reaction N,N'-diacetylchitobiose + H2O = N-acetyl-beta-D-glucosaminyl-(1-&gt;4)-D-glucosamine + acetate. It carries out the reaction diacetylchitobiose-6'-phosphate + H2O = N'-monoacetylchitobiose-6'-phosphate + acetate. It functions in the pathway glycan degradation; chitin degradation. Involved in the degradation of chitin. ChbG is essential for growth on the acetylated chitooligosaccharides chitobiose and chitotriose but is dispensable for growth on cellobiose and chitosan dimer, the deacetylated form of chitobiose. Deacetylation of chitobiose-6-P and chitotriose-6-P is necessary for both the activation of the chb promoter by the regulatory protein ChbR and the hydrolysis of phosphorylated beta-glucosides by the phospho-beta-glucosidase ChbF. Catalyzes the removal of only one acetyl group from chitobiose-6-P to yield monoacetylchitobiose-6-P, the inducer of ChbR and the substrate of ChbF. The sequence is that of Chitooligosaccharide deacetylase from Escherichia fergusonii (strain ATCC 35469 / DSM 13698 / CCUG 18766 / IAM 14443 / JCM 21226 / LMG 7866 / NBRC 102419 / NCTC 12128 / CDC 0568-73).